The chain runs to 245 residues: Ribonuclease 3 (245 aa).

Residues 19–144 (ASILEERTGH…LIATIYLDGG (126 aa)) form the RNase III domain. Glu57 serves as a coordination point for Mg(2+). Asp61 is a catalytic residue. Asp130 and Glu133 together coordinate Mg(2+). The active site involves Glu133. Positions 169-238 (DAKTELQEWA…AEAMLYREGV (70 aa)) constitute a DRBM domain.

Belongs to the ribonuclease III family. In terms of assembly, homodimer. It depends on Mg(2+) as a cofactor.

The protein resides in the cytoplasm. It carries out the reaction Endonucleolytic cleavage to 5'-phosphomonoester.. Its function is as follows. Digests double-stranded RNA. Involved in the processing of primary rRNA transcript to yield the immediate precursors to the large and small rRNAs (23S and 16S). Processes some mRNAs, and tRNAs when they are encoded in the rRNA operon. Processes pre-crRNA and tracrRNA of type II CRISPR loci if present in the organism. The polypeptide is Ribonuclease 3 (Brucella abortus (strain S19)).